Reading from the N-terminus, the 593-residue chain is Glutamyl-tRNA(Gln) amidotransferase subunit B, mitochondrial (593 aa).

Residues 1 to 49 (MLRPWLRQSTRAARSLPCCQCPRPYSSRLPTLTSPSSSVRRLQTSASES) constitute a mitochondrion transit peptide. Low complexity predominate over residues 27–42 (SRLPTLTSPSSSVRRL). The interval 27 to 80 (SRLPTLTSPSSSVRRLQTSASESQDRVPLRKQLKQNAKALKAEKRQRRESEEAS) is disordered. Basic and acidic residues predominate over residues 66-80 (LKAEKRQRRESEEAS).

This sequence belongs to the GatB/GatE family. GatB subfamily. As to quaternary structure, subunit of the heterotrimeric GatCAB amidotransferase (AdT) complex, composed of A, B and C subunits.

The protein localises to the mitochondrion. It catalyses the reaction L-glutamyl-tRNA(Gln) + L-glutamine + ATP + H2O = L-glutaminyl-tRNA(Gln) + L-glutamate + ADP + phosphate + H(+). Its function is as follows. Allows the formation of correctly charged Gln-tRNA(Gln) through the transamidation of misacylated Glu-tRNA(Gln) in the mitochondria. The reaction takes place in the presence of glutamine and ATP through an activated gamma-phospho-Glu-tRNA(Gln). This Aspergillus oryzae (strain ATCC 42149 / RIB 40) (Yellow koji mold) protein is Glutamyl-tRNA(Gln) amidotransferase subunit B, mitochondrial.